The primary structure comprises 392 residues: Telomere-binding protein subunit beta (392 aa).

The interval 234–392 (QQVESVQVQP…ASKASKRSKK (159 aa)) is disordered. A compositionally biased stretch (basic residues) spans 247–256 (GGAKGKKKAA). The segment covering 257–268 (TKSATKKTVAAK) has biased composition (low complexity). Residues 269-284 (KTAESADVRKSVDKIV) are compositionally biased toward basic and acidic residues. Over residues 328–343 (SPSGKKSTKTTDQMTM) the composition is skewed to polar residues. Positions 374–384 (GKASATSGKAS) are enriched in low complexity.

In terms of assembly, heterodimer of an alpha and a beta subunit.

Its subcellular location is the nucleus. The protein localises to the chromosome. It localises to the telomere. Its function is as follows. May function as protective capping of the single-stranded telomeric overhang. May also participate in telomere length regulation during DNA replication. This chain is Telomere-binding protein subunit beta (STY43), found in Stylonychia mytilus (Ciliate).